Here is a 271-residue protein sequence, read N- to C-terminus: Orotidine 5'-phosphate decarboxylase (271 aa).

Catalysis depends on Lys95, which acts as the Proton donor.

This sequence belongs to the OMP decarboxylase family. Type 2 subfamily.

The enzyme catalyses orotidine 5'-phosphate + H(+) = UMP + CO2. The protein operates within pyrimidine metabolism; UMP biosynthesis via de novo pathway; UMP from orotate: step 2/2. The protein is Orotidine 5'-phosphate decarboxylase (pyrF) of Ralstonia nicotianae (strain ATCC BAA-1114 / GMI1000) (Ralstonia solanacearum).